The following is a 142-amino-acid chain: Salivary protein 15a (142 aa).

The N-terminal stretch at 1–20 (MKYLGLALISAVFLIGACQA) is a signal peptide. Disulfide bonds link Cys27–Cys44, Cys40–Cys108, and Cys91–Cys117.

The protein belongs to the PBP/GOBP family. In terms of tissue distribution, female salivary gland (at protein level).

The protein localises to the secreted. Functionally, inhibits contact coagulation pathway activation in the host by sequestering anionic polymers, such as polyphosphate and dextran sulfate, and thus blocking interaction of protein components of the pathway with negatively charged surfaces. Inhibits dextran sulfate-mediated autoactivation of host coagulation factor XII (F12). Inhibits dextran sulfate-mediated autoactivation of host factor XI (F11). Inhibits polyphosphate-mediated activation of host F11 by thrombin (F2). May inhibit dextran sulfate-mediated bradykinin generation in host plasma. The chain is Salivary protein 15a from Phlebotomus duboscqi (Sandfly).